Reading from the N-terminus, the 366-residue chain is 3-dehydroquinate synthase (366 aa).

Residues Asp-69–Lys-74, Gly-103–Asp-107, Thr-127–Thr-128, Lys-140, and Lys-149 each bind NAD(+). Positions 182, 245, and 262 each coordinate Zn(2+).

It belongs to the sugar phosphate cyclases superfamily. Dehydroquinate synthase family. The cofactor is Co(2+). Zn(2+) is required as a cofactor. NAD(+) serves as cofactor.

The protein localises to the cytoplasm. The enzyme catalyses 7-phospho-2-dehydro-3-deoxy-D-arabino-heptonate = 3-dehydroquinate + phosphate. Its pathway is metabolic intermediate biosynthesis; chorismate biosynthesis; chorismate from D-erythrose 4-phosphate and phosphoenolpyruvate: step 2/7. In terms of biological role, catalyzes the conversion of 3-deoxy-D-arabino-heptulosonate 7-phosphate (DAHP) to dehydroquinate (DHQ). This Pseudomonas fluorescens (strain ATCC BAA-477 / NRRL B-23932 / Pf-5) protein is 3-dehydroquinate synthase.